The chain runs to 417 residues: Gelsolin (417 aa).

One copy of the Gelsolin-like 4 repeat lies at 93–171 (KVPVLESHYG…VVQGKEPAHL (79 aa)). Residues Gly107, Asp108, Glu138, Asp150, Gly155, Pro157, Thr187, Asn227, Asp228, Glu250, Asp331, Asp332, and Glu354 each coordinate Ca(2+). Gelsolin-like repeat units lie at residues 213-261 (RAVE…LKIL) and 316-392 (IEEV…PTFI).

The protein belongs to the villin/gelsolin family.

Its subcellular location is the cytoplasm. It is found in the cytoskeleton. In terms of biological role, calcium-regulated, actin-modulating protein that binds to the plus (or barbed) ends of actin monomers or filaments, preventing monomer exchange (end-blocking or capping). It can promote the assembly of monomers into filaments (nucleation) as well as sever filaments already formed. Plays a role in ciliogenesis. The chain is Gelsolin (gsn) from Xenopus laevis (African clawed frog).